Reading from the N-terminus, the 153-residue chain is Aspartate carbamoyltransferase regulatory chain (153 aa).

Positions 109, 114, 138, and 141 each coordinate Zn(2+).

It belongs to the PyrI family. Contains catalytic and regulatory chains. Requires Zn(2+) as cofactor.

Its function is as follows. Involved in allosteric regulation of aspartate carbamoyltransferase. The chain is Aspartate carbamoyltransferase regulatory chain from Cenarchaeum symbiosum (strain A).